A 268-amino-acid chain; its full sequence is 4-hydroxy-tetrahydrodipicolinate reductase (268 aa).

NAD(+)-binding positions include 10 to 15 (GASGRM) and Asp36. Arg37 provides a ligand contact to NADP(+). Residues 99–101 (GTT) and 123–126 (SANM) contribute to the NAD(+) site. His156 serves as the catalytic Proton donor/acceptor. His157 is a (S)-2,3,4,5-tetrahydrodipicolinate binding site. Lys160 serves as the catalytic Proton donor. 166-167 (GT) is a (S)-2,3,4,5-tetrahydrodipicolinate binding site.

The protein belongs to the DapB family.

The protein resides in the cytoplasm. It carries out the reaction (S)-2,3,4,5-tetrahydrodipicolinate + NAD(+) + H2O = (2S,4S)-4-hydroxy-2,3,4,5-tetrahydrodipicolinate + NADH + H(+). It catalyses the reaction (S)-2,3,4,5-tetrahydrodipicolinate + NADP(+) + H2O = (2S,4S)-4-hydroxy-2,3,4,5-tetrahydrodipicolinate + NADPH + H(+). Its pathway is amino-acid biosynthesis; L-lysine biosynthesis via DAP pathway; (S)-tetrahydrodipicolinate from L-aspartate: step 4/4. Functionally, catalyzes the conversion of 4-hydroxy-tetrahydrodipicolinate (HTPA) to tetrahydrodipicolinate. This chain is 4-hydroxy-tetrahydrodipicolinate reductase, found in Burkholderia pseudomallei (strain 1710b).